A 66-amino-acid chain; its full sequence is Alpha-conotoxin GID (66 aa).

The N-terminal stretch at 1–21 is a signal peptide; sequence MGMRMMFTVFLLVVLAATIVS. Positions 22 to 44 are excised as a propeptide; sequence FTSDRASDGRNVAAKAFHRIGRT. The N-terminal tail important for activity on alpha-3-beta-2/CHRNA3-CHRNB2 and alpha-4-beta-2/CHRNA4-CHRNB2 nAChR stretch occupies residues 45–48; sequence IRDE. Residue Glu-48 is modified to 4-carboxyglutamate. Cystine bridges form between Cys-49–Cys-55 and Cys-50–Cys-63. Positions 51-53 are ser-Xaa-Pro motif, crucial for potent interaction with nAChR; sequence SNP. At Pro-60 the chain carries 4-hydroxyproline.

It belongs to the conotoxin A superfamily. Post-translationally, gamma-carboxyglutamation of Glu-48 seems to be not important for nAChR inhibition, since synthetic peptides without this modification do not show change in inhibition of alpha-7/CHRNA7 and alpha-3-beta-2/CHRNA3-CHRNB2 nAChR and show a 2.3-fold increase in inhibition of alpha-4-beta-2/CHRNA4-CHRNB2 nAChR. In terms of processing, hydroxylation of Pro-60 seems to be important for nAChR inhibition, since synthetic peptides without this modification show a small decrease in inhibition of alpha-7/CHRNA7 and alpha-3-beta-2/CHRNA3-CHRNB2 nAChR and a very important decrease in inhibition of alpha-4-beta-2/CHRNA4-CHRNB2 nAChR. An amidation of Cys-63 increases potency against alpha-7/CHRNA7 (2.6-fold) and alpha-3-beta-2/CHRNA3-CHRNB2 (2-fold) nAChR. On the other hand, the peptide has no more activity on alpha-4-beta-2/CHRNA4-CHRNB2 nAChR with an amidated Cys-63. In terms of tissue distribution, expressed by the venom duct.

The protein localises to the secreted. Functionally, alpha-conotoxins act on postsynaptic membranes, they bind to the nicotinic acetylcholine receptors (nAChR) and thus inhibit them. This toxin reversibly blocks alpha-3-beta-2/CHRNA3-CHRNB2 (IC(50)=3.1-5.1 nM), alpha-7/CHRNA7 (IC(50)=4.5-5.1 nM), and alpha-4-beta-2/CHRNA4-CHRNB2 (IC(50)=128.6-390 nM) nAChRs. The polypeptide is Alpha-conotoxin GID (Conus geographus (Geography cone)).